The following is a 575-amino-acid chain: V-type ATP synthase alpha chain (575 aa).

An ATP-binding site is contributed by 238–245 (GPFGAGKT).

It belongs to the ATPase alpha/beta chains family.

The enzyme catalyses ATP + H2O + 4 H(+)(in) = ADP + phosphate + 5 H(+)(out). In terms of biological role, produces ATP from ADP in the presence of a proton gradient across the membrane. The V-type alpha chain is a catalytic subunit. The protein is V-type ATP synthase alpha chain of Borrelia garinii subsp. bavariensis (strain ATCC BAA-2496 / DSM 23469 / PBi) (Borreliella bavariensis).